The following is a 431-amino-acid chain: Histidine--tRNA ligase (431 aa).

This sequence belongs to the class-II aminoacyl-tRNA synthetase family.

Its subcellular location is the cytoplasm. It carries out the reaction tRNA(His) + L-histidine + ATP = L-histidyl-tRNA(His) + AMP + diphosphate + H(+). The sequence is that of Histidine--tRNA ligase (hisS) from Pyrococcus abyssi (strain GE5 / Orsay).